We begin with the raw amino-acid sequence, 605 residues long: MSAEELVASPKLSKEEKKARKEAKKLKKAEKAAKEAAAQEGVATEEVKEEVRKKDKKDKKEKKDKKRKEVDQEEAESPSTSTAATEEPPKKKKKSKDADSSETPVSTATPTESETPALSKKQQKKLAKASAAAAATSSAAAIPAPTVPTTFTAEHNTFLTSNNITLTPSLFPPLLSIRDLPINSKLQPFLNKFEKPTPIQACSWPALLSKKDVVGIAETGSGKTLAFGVPGINLLSQLPPVTGSKKGRGQVPGQIQMLVLAPTRELAQQSHEHLSAFGEQVGLKSVCIFGGVGKDGQARELSQKDTRVVVGTPGRTLDLADSGELDLSSVSYLVLDEADRMLDAGFENDIRRIIAHTPGHKEGRQTVMFSATWPESVRRLASTFLNNPLRITVGSDELSANKRIEQIVEVLDNPRDKDFRLTHHLKAHLKVHPNSKTSPTRILVFALYKKEAQRLEYTIRRAGYAVGALHGDMTQEARFKALEAFKTGQQNVLVATDVAARGLDIPDVGLVINVTFPLTTEDFVHRCGRTGRAGKTGKAVTFFTGENHEKSLAGEFMRVLRDVGAEIPKEMDRFPTTIKKKEHGSYGAFYKETTNAPAPTKITFD.

The interval 1–124 (MSAEELVASP…TPALSKKQQK (124 aa)) is disordered. A compositionally biased stretch (basic residues) spans 54–66 (KDKKDKKEKKDKK). A compositionally biased stretch (polar residues) spans 104–114 (PVSTATPTESE). The Q motif motif lies at 175 to 201 (LSIRDLPINSKLQPFLNKFEKPTPIQA). Positions 204–391 (WPALLSKKDV…STFLNNPLRI (188 aa)) constitute a Helicase ATP-binding domain. 217–224 (AETGSGKT) provides a ligand contact to ATP. A DEAD box motif is present at residues 336–339 (DEAD). Residues 424–575 (HLKAHLKVHP…EIPKEMDRFP (152 aa)) enclose the Helicase C-terminal domain.

Belongs to the DEAD box helicase family. DDX5/DBP2 subfamily.

Its subcellular location is the nucleus. The protein localises to the nucleolus. It catalyses the reaction ATP + H2O = ADP + phosphate + H(+). Functionally, ATP-dependent RNA helicase required for 60S ribosomal subunit synthesis. Involved in efficient pre-rRNA processing, predominantly at site A3, which is necessary for the normal formation of 25S and 5.8S rRNAs. The protein is ATP-dependent RNA helicase DBP3 (DBP3) of Cryptococcus neoformans var. neoformans serotype D (strain JEC21 / ATCC MYA-565) (Filobasidiella neoformans).